Reading from the N-terminus, the 367-residue chain is Quinolinate synthase (367 aa).

Residues H45 and S62 each coordinate iminosuccinate. C109 contacts [4Fe-4S] cluster. Residues 140 to 142 and S161 contribute to the iminosuccinate site; that span reads YVN. C229 provides a ligand contact to [4Fe-4S] cluster. Iminosuccinate-binding positions include 255-257 and T272; that span reads HPE. C319 serves as a coordination point for [4Fe-4S] cluster.

This sequence belongs to the quinolinate synthase family. Type 3 subfamily. It depends on [4Fe-4S] cluster as a cofactor.

The protein localises to the cytoplasm. It carries out the reaction iminosuccinate + dihydroxyacetone phosphate = quinolinate + phosphate + 2 H2O + H(+). Its pathway is cofactor biosynthesis; NAD(+) biosynthesis; quinolinate from iminoaspartate: step 1/1. Catalyzes the condensation of iminoaspartate with dihydroxyacetone phosphate to form quinolinate. This is Quinolinate synthase from Halalkalibacterium halodurans (strain ATCC BAA-125 / DSM 18197 / FERM 7344 / JCM 9153 / C-125) (Bacillus halodurans).